A 220-amino-acid polypeptide reads, in one-letter code: MRQLTPHEARVLATLMEKARTVPDSYPLSLNTLVLGCNQKTSRDPVMDLTEAQAQAAIDTLKKQSLVFEASSSRVPRFEHNFQRGFGVSEPQAVLLGLLMLRGPQTPGELRLNSERWYKFADIASVEDALAELKARGDDSGALMVVQLARTAGMREQRWAHLLCGESLLMPYQQAGSGDAAINPETEPVSLGQAERLQQRIDALERQVAHLYKELGLSQA.

The protein belongs to the UPF0502 family.

The protein is UPF0502 protein Pnap_3223 of Polaromonas naphthalenivorans (strain CJ2).